Reading from the N-terminus, the 354-residue chain is Ribosomal RNA large subunit methyltransferase M (354 aa).

S-adenosyl-L-methionine-binding positions include S183, S216–G219, D235, D255, and D271. K300 serves as the catalytic Proton acceptor.

The protein belongs to the class I-like SAM-binding methyltransferase superfamily. RNA methyltransferase RlmE family. RlmM subfamily. As to quaternary structure, monomer.

Its subcellular location is the cytoplasm. The enzyme catalyses cytidine(2498) in 23S rRNA + S-adenosyl-L-methionine = 2'-O-methylcytidine(2498) in 23S rRNA + S-adenosyl-L-homocysteine + H(+). Catalyzes the 2'-O-methylation at nucleotide C2498 in 23S rRNA. The polypeptide is Ribosomal RNA large subunit methyltransferase M (Pseudomonas putida (strain ATCC 700007 / DSM 6899 / JCM 31910 / BCRC 17059 / LMG 24140 / F1)).